Here is a 66-residue protein sequence, read N- to C-terminus: Large ribosomal subunit protein bL35 (66 aa).

A compositionally biased stretch (basic residues) spans 1 to 44; it reads MPKLKSHRGAAKRFRKTASGAIKRRGAYRNHILTKKSTKQKRHL. The tract at residues 1 to 48 is disordered; it reads MPKLKSHRGAAKRFRKTASGAIKRRGAYRNHILTKKSTKQKRHLRVEA.

Belongs to the bacterial ribosomal protein bL35 family.

This Legionella pneumophila (strain Corby) protein is Large ribosomal subunit protein bL35.